The following is a 137-amino-acid chain: MKVSPRRRARECAVQALYSWYISQNSIEEVELAFVTDQDMKGVDLPYFRKLLRGTALYVEAIDHDIRPYLDRMENDVDPIERTILRLATYELKYELDVPYKVVINEGIEVAKVFGSDDSHKYINGILDKLAPALGRK.

The protein belongs to the NusB family.

Its function is as follows. Involved in transcription antitermination. Required for transcription of ribosomal RNA (rRNA) genes. Binds specifically to the boxA antiterminator sequence of the ribosomal RNA (rrn) operons. This chain is Transcription antitermination protein NusB, found in Haemophilus ducreyi (strain 35000HP / ATCC 700724).